The following is a 260-amino-acid chain: Probable carbohydrate esterase At4g34215 (260 aa).

A disordered region spans residues 1–22 (MEGGSITPGEDKPEIQSPIPPN). Catalysis depends on residues S31, D235, and H238.

Belongs to the carbohydrate esterase 6 family.

The sequence is that of Probable carbohydrate esterase At4g34215 from Arabidopsis thaliana (Mouse-ear cress).